Reading from the N-terminus, the 263-residue chain is Tryptophan 2,3-dioxygenase (263 aa).

Residues 32 to 36 (FIIVH), Tyr94, and Arg98 contribute to the substrate site. His221 provides a ligand contact to heme. Residue Thr235 participates in substrate binding.

The protein belongs to the tryptophan 2,3-dioxygenase family. In terms of assembly, homotetramer. Heme is required as a cofactor.

It catalyses the reaction L-tryptophan + O2 = N-formyl-L-kynurenine. It functions in the pathway amino-acid degradation; L-tryptophan degradation via kynurenine pathway; L-kynurenine from L-tryptophan: step 1/2. Functionally, heme-dependent dioxygenase that catalyzes the oxidative cleavage of the L-tryptophan (L-Trp) pyrrole ring and converts L-tryptophan to N-formyl-L-kynurenine. Catalyzes the oxidative cleavage of the indole moiety. The polypeptide is Tryptophan 2,3-dioxygenase (Erythrobacter litoralis (strain HTCC2594)).